Consider the following 140-residue polypeptide: Large-conductance mechanosensitive channel (140 aa).

The next 2 helical transmembrane spans lie at 16-36 (VIDL…VTAL) and 84-104 (INTV…VKLI).

This sequence belongs to the MscL family. As to quaternary structure, homopentamer.

It is found in the cell inner membrane. Channel that opens in response to stretch forces in the membrane lipid bilayer. May participate in the regulation of osmotic pressure changes within the cell. This chain is Large-conductance mechanosensitive channel, found in Xanthomonas oryzae pv. oryzae (strain PXO99A).